The chain runs to 436 residues: MTKALYDRDGAAIGNLQKLRFFPLAISGGRGARLIEENGRELIDLSGAWGAASLGYGHPAIVAAVSAAAANPAGATILSASNAPAVTLAERLLASFPGEGTHKIWFGHSGSDANEAAYRAIVKATGRSGVIAFAGAYHGCTVGSMAFSGHSVQADAAKADGLILLPYPDPYRPYRNDPTGDAILTLLTEKLAAVPAGSIGAAFIEPIQSDGGLIVPPDGFLRKFADICRAHGILVVCDEVKVGLARSGRLHCFEHEGFVPDILVLGKGLGGGLPLSAVIAPAEILDCASAFAMQTLHGNPISAAAGLAVLETIDRDDLPAMAERKGRLLRDGLSELAKRHPLIGDIRGRGLACGMELVCDRQSREPARAETAKLIYRAYQLGLVVYYVGMNGNVLEFTPPLTITETDIHKALDLLDRAFSELSAVSNEEIAQFAGW.

Pyridoxal 5'-phosphate is bound by residues 110 to 111 (GS), Y137, and 238 to 241 (DEVK). The active site involves Y137. Position 267 is an N6-(pyridoxal phosphate)lysine (K267). T295 provides a ligand contact to pyridoxal 5'-phosphate.

It belongs to the class-III pyridoxal-phosphate-dependent aminotransferase family. In terms of assembly, monomer. Pyridoxal 5'-phosphate serves as cofactor.

The enzyme catalyses L-2-aminohexano-6-lactam = D-2-aminohexano-6-lactam. Functionally, catalyzes the interconversion of L-alpha-amino-epsilon-caprolactam and D-alpha-amino-epsilon-caprolactam. In Achromobacter obae, this protein is 2-aminohexano-6-lactam racemase.